The following is a 96-amino-acid chain: Muconolactone Delta-isomerase (96 aa).

It belongs to the muconolactone Delta-isomerase family. As to quaternary structure, homodecamer.

The enzyme catalyses (S)-muconolactone = (4,5-dihydro-5-oxofuran-2-yl)-acetate. The protein operates within aromatic compound metabolism; beta-ketoadipate pathway; 5-oxo-4,5-dihydro-2-furylacetate from catechol: step 3/3. In Pseudomonas aeruginosa (strain ATCC 15692 / DSM 22644 / CIP 104116 / JCM 14847 / LMG 12228 / 1C / PRS 101 / PAO1), this protein is Muconolactone Delta-isomerase (catC).